A 248-amino-acid polypeptide reads, in one-letter code: Protein LIFEGUARD 3 (248 aa).

Helical transmembrane passes span 42 to 62 (VYSI…TVVT), 74 to 94 (GLGL…LCPL), 105 to 125 (YLLL…TCAF), 130 to 150 (VILE…LYTF), 165 to 185 (FLFG…LFPL), 188 to 208 (VSVM…IVYD), and 222 to 242 (IWAA…LLTV).

Belongs to the BI1 family.

It localises to the membrane. The chain is Protein LIFEGUARD 3 from Arabidopsis thaliana (Mouse-ear cress).